Reading from the N-terminus, the 845-residue chain is Lon protease (845 aa).

One can recognise a Lon N-terminal domain in the interval 45-242 (MPILALRNMI…RLLYLLHKEL (198 aa)). 393–400 (GPPGVGKT) contacts ATP. The Lon proteolytic domain maps to 629 to 811 (NGDAGVVIGL…NEVLKEALLE (183 aa)). Residues serine 717 and lysine 760 contribute to the active site.

This sequence belongs to the peptidase S16 family. In terms of assembly, homohexamer. Organized in a ring with a central cavity.

The protein localises to the cytoplasm. It carries out the reaction Hydrolysis of proteins in presence of ATP.. ATP-dependent serine protease that mediates the selective degradation of mutant and abnormal proteins as well as certain short-lived regulatory proteins. Required for cellular homeostasis and for survival from DNA damage and developmental changes induced by stress. Degrades polypeptides processively to yield small peptide fragments that are 5 to 10 amino acids long. Binds to DNA in a double-stranded, site-specific manner. This Porphyromonas gingivalis (strain ATCC 33277 / DSM 20709 / CIP 103683 / JCM 12257 / NCTC 11834 / 2561) protein is Lon protease.